The primary structure comprises 87 residues: MKIKTTVAALSVLSVLSFGAFAADSIDAAQAQNREAIGTVSVSGVASSPMDMREMLNKKAEEKGATAYQITEARSGDTWHATAELYK.

The signal sequence occupies residues 1–22 (MKIKTTVAALSVLSVLSFGAFA).

Belongs to the BhsA/McbA family.

The protein localises to the periplasm. This is an uncharacterized protein from Escherichia coli O6:H1 (strain CFT073 / ATCC 700928 / UPEC).